Here is a 293-residue protein sequence, read N- to C-terminus: Protease HtpX homolog (293 aa).

A run of 2 helical transmembrane segments spans residues 4–24 and 39–59; these read IFLF…VLSL and PMLL…SLLI. Histidine 144 contacts Zn(2+). Glutamate 145 is a catalytic residue. Histidine 148 contributes to the Zn(2+) binding site. 2 helical membrane-spanning segments follow: residues 159 to 179 and 200 to 220; these read LVQG…GYFV and ITVL…VAWF. Glutamate 225 lines the Zn(2+) pocket.

Belongs to the peptidase M48B family. It depends on Zn(2+) as a cofactor.

The protein localises to the cell inner membrane. This chain is Protease HtpX homolog, found in Herminiimonas arsenicoxydans.